Reading from the N-terminus, the 521-residue chain is Outer membrane protein assembly factor BamB (521 aa).

The N-terminal stretch at 1 to 19 (MKKLFLVIVPLLLSLLATS) is a signal peptide. Residue Cys20 is the site of N-palmitoyl cysteine attachment. Residue Cys20 is the site of S-diacylglycerol cysteine attachment. The disordered stretch occupies residues 418-521 (KSGSIESSPK…IGDFSKGDSD (104 aa)). Positions 429–444 (LPDKKVDSNKTSKNDT) are enriched in basic and acidic residues. Over residues 445–477 (DSNPATTATSTKDIQNPANQEMINSTPVSNTST) the composition is skewed to polar residues.

It belongs to the BamB family. Part of the Bam complex.

It localises to the cell outer membrane. Functionally, part of the outer membrane protein assembly complex, which is involved in assembly and insertion of beta-barrel proteins into the outer membrane. This chain is Outer membrane protein assembly factor BamB, found in Francisella salina.